The chain runs to 699 residues: 1,4-alpha-glucan-branching enzyme (699 aa).

Substrate-binding positions include 59-60 (NE) and 88-90 (WAP). A (1,4-alpha-D-glucosyl)n-binding site is contributed by tryptophan 104. 115–118 (DYGK) provides a ligand contact to substrate. Residue lysine 140 coordinates (1,4-alpha-D-glucosyl)n. At tyrosine 170 the chain carries Phosphotyrosine. 330–333 (EVLR) is a binding site for substrate. The active-site Nucleophile is aspartate 354. Catalysis depends on glutamate 409, which acts as the Proton donor.

The protein belongs to the glycosyl hydrolase 13 family. GlgB subfamily. In terms of assembly, monomer.

It catalyses the reaction Transfers a segment of a (1-&gt;4)-alpha-D-glucan chain to a primary hydroxy group in a similar glucan chain.. The protein operates within glycan biosynthesis; glycogen biosynthesis. Functionally, glycogen-branching enzyme participates in the glycogen biosynthetic process along with glycogenin and glycogen synthase. Generates alpha-1,6-glucosidic branches from alpha-1,4-linked glucose chains, to increase solubility of the glycogen polymer. The chain is 1,4-alpha-glucan-branching enzyme (GBE1) from Felis catus (Cat).